Consider the following 346-residue polypeptide: 3-dehydroquinate synthase (346 aa).

Residues 62–67 (DGEEYK), 96–100 (GVISD), 120–121 (TT), K133, K142, and 160–163 (FLRT) each bind NAD(+). Positions 175, 234, and 251 each coordinate Zn(2+).

The protein belongs to the sugar phosphate cyclases superfamily. Dehydroquinate synthase family. Co(2+) serves as cofactor. It depends on Zn(2+) as a cofactor. The cofactor is NAD(+).

It is found in the cytoplasm. The catalysed reaction is 7-phospho-2-dehydro-3-deoxy-D-arabino-heptonate = 3-dehydroquinate + phosphate. It functions in the pathway metabolic intermediate biosynthesis; chorismate biosynthesis; chorismate from D-erythrose 4-phosphate and phosphoenolpyruvate: step 2/7. Functionally, catalyzes the conversion of 3-deoxy-D-arabino-heptulosonate 7-phosphate (DAHP) to dehydroquinate (DHQ). This Campylobacter curvus (strain 525.92) protein is 3-dehydroquinate synthase.